The sequence spans 303 residues: Movement protein (303 aa).

A compositionally biased stretch (polar residues) spans 1-18 (MSNIVSPFSGSSRTTSDV). Disordered stretches follow at residues 1–24 (MSNI…QAGG) and 267–303 (EESE…LRIK).

Belongs to the bromovirus movement protein family. Phosphorylated by host.

Its subcellular location is the host cell junction. It is found in the host plasmodesma. Its function is as follows. Transports viral genome to neighboring plant cells directly through plasmosdesmata, without any budding. The movement protein allows efficient cell to cell propagation, by bypassing the host cell wall barrier. Acts by forming a tubular structure at the host plasmodesmata, enlarging it enough to allow free passage of virion capsids. In Brome mosaic virus (BMV), this protein is Movement protein.